The primary structure comprises 777 residues: Endonuclease MutS2 (777 aa).

328–335 (GPNTGGKT) contributes to the ATP binding site. A Smr domain is found at 702–777 (LDIRGMNTLE…GDGATEVYLK (76 aa)).

It belongs to the DNA mismatch repair MutS family. MutS2 subfamily. Homodimer. Binds to stalled ribosomes, contacting rRNA.

Functionally, endonuclease that is involved in the suppression of homologous recombination and thus may have a key role in the control of bacterial genetic diversity. Acts as a ribosome collision sensor, splitting the ribosome into its 2 subunits. Detects stalled/collided 70S ribosomes which it binds and splits by an ATP-hydrolysis driven conformational change. Acts upstream of the ribosome quality control system (RQC), a ribosome-associated complex that mediates the extraction of incompletely synthesized nascent chains from stalled ribosomes and their subsequent degradation. Probably generates substrates for RQC. The polypeptide is Endonuclease MutS2 (Carboxydothermus hydrogenoformans (strain ATCC BAA-161 / DSM 6008 / Z-2901)).